A 117-amino-acid polypeptide reads, in one-letter code: Replication initiation control protein YabA (117 aa).

Zn(2+) is bound by residues His87, Cys89, Cys103, and Cys106.

This sequence belongs to the YabA family. Homotetramer. Interacts with both DnaA and DnaN, acting as a bridge between these two proteins. Zn(2+) serves as cofactor.

The protein localises to the cytoplasm. The protein resides in the nucleoid. Functionally, involved in control of chromosome replication initiation. Inhibits the cooperative binding of DnaA to the oriC region, thus negatively regulating initiation of chromosome replication. Inhibits the ability of DnaA-ATP to form a helix on DNA; does not disassemble preformed DnaA-DNA helices. Decreases the residence time of DnaA on the chromosome at its binding sites (oriC, replication forks and promoter-binding sites). Tethers DnaA to the replication machinery via the DNA polymerase beta sliding clamp subunit (dnaN). Associates with oriC and other DnaA targets on the chromosome in a DnaA-dependent manner. The protein is Replication initiation control protein YabA of Latilactobacillus sakei subsp. sakei (strain 23K) (Lactobacillus sakei subsp. sakei).